The sequence spans 132 residues: Small ribosomal subunit protein uS8c (132 aa).

This sequence belongs to the universal ribosomal protein uS8 family. Part of the 30S ribosomal subunit.

Its subcellular location is the plastid. It localises to the chloroplast. One of the primary rRNA binding proteins, it binds directly to 16S rRNA central domain where it helps coordinate assembly of the platform of the 30S subunit. In Phaeodactylum tricornutum (strain CCAP 1055/1), this protein is Small ribosomal subunit protein uS8c (rps8).